The chain runs to 375 residues: Adiponectin receptor protein 1 (375 aa).

The interval 1–60 is disordered; sequence MSSHKGSAGAQGNGAPSGNREADTVELAELGPLLEEKGKRAASSPAKAEEDQACPVPQEE. Topologically, residues 1–136 are cytoplasmic; the sequence is MSSHKGSAGA…SIFRIHTETG (136 aa). The helical transmembrane segment at 137 to 157 threads the bilayer; sequence NIWTHLLGFVLFLFLGILTML. The Extracellular portion of the chain corresponds to 158–170; the sequence is RPNMYFMAPLQEK. The helical transmembrane segment at 171-191 threads the bilayer; sequence VVFGMFFLGAVLCLSFSWLFH. Histidine 191 provides a ligand contact to Zn(2+). At 192-203 the chain is on the cytoplasmic side; the sequence is TVYCHSEKVSRT. A helical transmembrane segment spans residues 204-224; the sequence is FSKLDYSGIALLIMGSFVPWL. Over 225–234 the chain is Extracellular; sequence YYSFYCSPQP. Residues 235-255 form a helical membrane-spanning segment; it reads RLIYLSIVCVLGISAIIVAQW. Over 256-264 the chain is Cytoplasmic; it reads DRFATPKHR. Residues 265–285 traverse the membrane as a helical segment; it reads QTRAGVFLGLGLSGVVPTMHF. Residues 286–298 are Extracellular-facing; that stretch reads TIAEGFVKATTVG. The chain crosses the membrane as a helical span at residues 299–319; sequence QMGWFFLMAVMYITGAGLYAA. The Cytoplasmic portion of the chain corresponds to 320 to 337; sequence RIPERFFPGKFDIWFQSH. Zn(2+) contacts are provided by histidine 337 and histidine 341. Residues 338–358 form a helical membrane-spanning segment; that stretch reads QIFHVLVVAAAFVHFYGVSNL. Residues 359-375 are Extracellular-facing; it reads QEFRYGLEGGCTDDSLL.

It belongs to the ADIPOR family. May form homooligomers and heterooligomers with ADIPOR2. Interacts with APPL2 (via BAR domain); hinders the accessibility of APPL1 to ADIPOR1; negatively regulates adiponectin signaling; ADIPOQ dissociates this interaction and facilitates the recruitment of APPL1 to ADIPOR1. Interacts with APPL1; ADIPOQ enhances this interaction; inhibites adiponectin-stimulated binding of APPL2 to ADIPOR1. As to expression, detected in brain and quadriceps muscle (at protein level). Widely expressed. Expressed in heart, kidney, liver, lung, skeletal muscle, white adipose tissue, brown adipose tissue, aorta and spleen. Weakly expressed in brain and testis.

It localises to the cell membrane. Receptor for ADIPOQ, an essential hormone secreted by adipocytes that regulates glucose and lipid metabolism. Required for normal glucose and fat homeostasis and for maintaining a normal body weight. ADIPOQ-binding activates a signaling cascade that leads to increased AMPK activity, and ultimately to increased fatty acid oxidation, increased glucose uptake and decreased gluconeogenesis. Has high affinity for globular adiponectin and low affinity for full-length adiponectin. This is Adiponectin receptor protein 1 from Mus musculus (Mouse).